A 487-amino-acid polypeptide reads, in one-letter code: Rhoptry apical surface protein 1 (487 aa).

The interval 337 to 487 (EVAMSGRGGH…EEEQPLLFTQ (151 aa)) is disordered. Composition is skewed to basic and acidic residues over residues 385-399 (DGIRGRSPRGSDRRA) and 454-475 (EKNEEASEADERPRERTEGVEY).

Interacts with RASP2.

The protein localises to the cytoplasmic vesicle. It localises to the secretory vesicle. It is found in the rhoptry membrane. This Toxoplasma gondii (strain ATCC 50853 / GT1) protein is Rhoptry apical surface protein 1.